The sequence spans 98 residues: NADH-ubiquinone oxidoreductase chain 4L (98 aa).

The next 3 helical transmembrane spans lie at 1-21 (MTLIHMNILMAFSMSLVGLLM), 29-49 (ALLCLEGMMLSLFVLAALTIL), and 61-81 (IILLVFAACEAAIGLALLVMV).

This sequence belongs to the complex I subunit 4L family. Core subunit of respiratory chain NADH dehydrogenase (Complex I) which is composed of 45 different subunits.

It localises to the mitochondrion inner membrane. The catalysed reaction is a ubiquinone + NADH + 5 H(+)(in) = a ubiquinol + NAD(+) + 4 H(+)(out). Functionally, core subunit of the mitochondrial membrane respiratory chain NADH dehydrogenase (Complex I) which catalyzes electron transfer from NADH through the respiratory chain, using ubiquinone as an electron acceptor. Part of the enzyme membrane arm which is embedded in the lipid bilayer and involved in proton translocation. This chain is NADH-ubiquinone oxidoreductase chain 4L (MT-ND4L), found in Eschrichtius robustus (California gray whale).